We begin with the raw amino-acid sequence, 303 residues long: uncharacterized protein (303 aa).

2 disordered regions span residues 1-89 and 132-159; these read MTSP…NVRS and SELP…STPR. The segment covering 61–89 has biased composition (polar residues); the sequence is RASQSGYRPSDPLTTTRQSNPAPGANVRS. 2 helical membrane-spanning segments follow: residues 205–225 and 264–284; these read LLLS…LYLL and VLVG…AAFV.

To M.tuberculosis Rv0007.

The protein resides in the cell membrane. This is an uncharacterized protein from Mycobacterium leprae (strain TN).